A 120-amino-acid polypeptide reads, in one-letter code: Insulin-like peptide 3 (120 aa).

The first 29 residues, 1–29 (MGIEMRCQDRRILLPSLLLLILMIGGVQA), serve as a signal peptide directing secretion. 3 disulfides stabilise this stretch: C34/C101, C46/C114, and C100/C105. Residues 51–89 (NAMTKRTLDPVNFNQIDGFEDRSLLERLLSDSSVQMLKT) constitute a propeptide, connecting peptide.

Belongs to the insulin family. In terms of assembly, heterodimer of a B chain and an A chain linked by two disulfide bonds. As to expression, expressed at a high level in seven cells of each larval brain hemisphere that may correspond to neurosecretory cells.

Its subcellular location is the secreted. Functionally, possible ligand of InR/insulin-like receptor. This chain is Insulin-like peptide 3, found in Drosophila melanogaster (Fruit fly).